The following is a 253-amino-acid chain: Triosephosphate isomerase (253 aa).

Residue 9–11 (NWK) participates in substrate binding. Histidine 97 serves as the catalytic Electrophile. Glutamate 169 acts as the Proton acceptor in catalysis. Substrate is bound by residues glycine 175, serine 215, and 236 to 237 (GG).

The protein belongs to the triosephosphate isomerase family. Homodimer.

The protein localises to the cytoplasm. It catalyses the reaction D-glyceraldehyde 3-phosphate = dihydroxyacetone phosphate. The protein operates within carbohydrate biosynthesis; gluconeogenesis. Its pathway is carbohydrate degradation; glycolysis; D-glyceraldehyde 3-phosphate from glycerone phosphate: step 1/1. Involved in the gluconeogenesis. Catalyzes stereospecifically the conversion of dihydroxyacetone phosphate (DHAP) to D-glyceraldehyde-3-phosphate (G3P). This chain is Triosephosphate isomerase, found in Staphylococcus saprophyticus subsp. saprophyticus (strain ATCC 15305 / DSM 20229 / NCIMB 8711 / NCTC 7292 / S-41).